Here is a 124-residue protein sequence, read N- to C-terminus: Photoactive yellow protein (124 aa).

Residues 22-85 form the PAS domain; that stretch reads AESLPFGAVL…GEFLKFNRTG (64 aa). The residue at position 68 (Cys68) is an S-(4-hydroxycinnamyl)cysteine.

This sequence belongs to the photoactive yellow protein family. The 4-hydroxycinnamic acid (p-coumaric acid) chromophore is covalently bound via a thioester linkage.

In terms of biological role, this photoactive protein is a photoreceptor with kinetics similar to that of rhodopsin. In Rhodobacter capsulatus (strain ATCC BAA-309 / NBRC 16581 / SB1003), this protein is Photoactive yellow protein (pyp).